The sequence spans 394 residues: Chorismate synthase (394 aa).

NADP(+)-binding residues include Arg42 and Arg48. FMN-binding positions include 137–139 (RAS), 258–259 (QA), Gly302, 317–321 (KPIAT), and Arg343.

Belongs to the chorismate synthase family. As to quaternary structure, homotetramer. FMNH2 serves as cofactor.

The enzyme catalyses 5-O-(1-carboxyvinyl)-3-phosphoshikimate = chorismate + phosphate. It functions in the pathway metabolic intermediate biosynthesis; chorismate biosynthesis; chorismate from D-erythrose 4-phosphate and phosphoenolpyruvate: step 7/7. In terms of biological role, catalyzes the anti-1,4-elimination of the C-3 phosphate and the C-6 proR hydrogen from 5-enolpyruvylshikimate-3-phosphate (EPSP) to yield chorismate, which is the branch point compound that serves as the starting substrate for the three terminal pathways of aromatic amino acid biosynthesis. This reaction introduces a second double bond into the aromatic ring system. This Streptomyces avermitilis (strain ATCC 31267 / DSM 46492 / JCM 5070 / NBRC 14893 / NCIMB 12804 / NRRL 8165 / MA-4680) protein is Chorismate synthase.